A 191-amino-acid chain; its full sequence is Small ribosomal subunit protein eS7 (191 aa).

Met-1 carries the N-acetylmethionine modification.

This sequence belongs to the eukaryotic ribosomal protein eS7 family.

The protein is Small ribosomal subunit protein eS7 (RPS7) of Brassica oleracea (Wild cabbage).